We begin with the raw amino-acid sequence, 235 residues long: MDILPAIDLKDGKAVRLSKGLMDSAKIYSDEPWQVALRFEELGSKWVHIVDLNGAFAGKPANLEQIKKIRENCNLKIELGGGIRDEETIKMYLELGVDRLILGSIAVKDPIFVKKMASKYPIAVGIDAMNGMVAVEGWAEVSTMKATDLAREFANAGVQAIICTDISKDGMLCGVNVEFTESIALASSVDTIASGGVKDIQDIINCKANGNISGVIVGKAFYEGTLDLEEAFKIL.

Asp-8 serves as the catalytic Proton acceptor. Asp-127 functions as the Proton donor in the catalytic mechanism.

The protein belongs to the HisA/HisF family.

The protein localises to the cytoplasm. The enzyme catalyses 1-(5-phospho-beta-D-ribosyl)-5-[(5-phospho-beta-D-ribosylamino)methylideneamino]imidazole-4-carboxamide = 5-[(5-phospho-1-deoxy-D-ribulos-1-ylimino)methylamino]-1-(5-phospho-beta-D-ribosyl)imidazole-4-carboxamide. Its pathway is amino-acid biosynthesis; L-histidine biosynthesis; L-histidine from 5-phospho-alpha-D-ribose 1-diphosphate: step 4/9. In Aliarcobacter butzleri (strain RM4018) (Arcobacter butzleri), this protein is 1-(5-phosphoribosyl)-5-[(5-phosphoribosylamino)methylideneamino] imidazole-4-carboxamide isomerase.